Reading from the N-terminus, the 439-residue chain is Elongation factor Tu, mitochondrial (439 aa).

Positions 51-246 (KPHVNIGTIG…AVDSYITLPE (196 aa)) constitute a tr-type G domain. Residues 60–67 (GHVDHGKT) are G1. 60–67 (GHVDHGKT) provides a ligand contact to GTP. Residues 101 to 105 (GITIS) form a G2 region. The segment at 122–125 (DCPG) is G3. Residues 122-126 (DCPGH) and 177-180 (NKVD) each bind GTP. A G4 region spans residues 177–180 (NKVD). The tract at residues 214–216 (SAL) is G5.

The protein belongs to the TRAFAC class translation factor GTPase superfamily. Classic translation factor GTPase family. EF-Tu/EF-1A subfamily.

The protein localises to the mitochondrion. This protein promotes the GTP-dependent binding of aminoacyl-tRNA to the A-site of ribosomes during protein biosynthesis. The sequence is that of Elongation factor Tu, mitochondrial (tuf1) from Schizosaccharomyces pombe (strain 972 / ATCC 24843) (Fission yeast).